The following is a 212-amino-acid chain: Glycerol-3-phosphate acyltransferase (212 aa).

The next 5 helical transmembrane spans lie at 3 to 23, 51 to 71, 78 to 98, 115 to 135, and 139 to 159; these read ILLA…VVVS, KAAI…VWLA, DVAV…PVFF, AVHP…AFFF, and SLAA…LFGT.

This sequence belongs to the PlsY family. Probably interacts with PlsX.

Its subcellular location is the cell inner membrane. It carries out the reaction an acyl phosphate + sn-glycerol 3-phosphate = a 1-acyl-sn-glycero-3-phosphate + phosphate. It participates in lipid metabolism; phospholipid metabolism. Catalyzes the transfer of an acyl group from acyl-phosphate (acyl-PO(4)) to glycerol-3-phosphate (G3P) to form lysophosphatidic acid (LPA). This enzyme utilizes acyl-phosphate as fatty acyl donor, but not acyl-CoA or acyl-ACP. This Burkholderia ambifaria (strain MC40-6) protein is Glycerol-3-phosphate acyltransferase.